A 35-amino-acid chain; its full sequence is Somatostatin (35 aa).

A disulfide bridge connects residues cysteine 24 and cysteine 35.

Belongs to the somatostatin family.

Its subcellular location is the secreted. In terms of biological role, somatostatin inhibits the release of somatotropin. This chain is Somatostatin (sst), found in Lampetra fluviatilis (European river lamprey).